A 108-amino-acid polypeptide reads, in one-letter code: MFMAENRLQLQKGSAEETIERFYNRQGIETIEGFQQMFVTKTLNTEDTDEVKILTIWESEDSFNNWLNSDVFKEAHKNVRLKSDDDGQQSPILSNKVFKYDIGYHYQK.

One can recognise an ABM domain in the interval 2–93 (FMAENRLQLQ…DDDGQQSPIL (92 aa)). Asn6 is a binding site for Fe cation. Heme is bound by residues 21–28 (RFYNRQGI) and His76.

This sequence belongs to the antibiotic biosynthesis monooxygenase family. Heme-degrading monooxygenase IsdG subfamily. In terms of assembly, homodimer.

Its subcellular location is the cytoplasm. The catalysed reaction is heme b + 5 AH2 + 4 O2 + 2 H(+) = delta-staphylobilin + Fe(2+) + formaldehyde + 5 A + 4 H2O. The enzyme catalyses heme b + 5 AH2 + 4 O2 + 2 H(+) = beta-staphylobilin + Fe(2+) + formaldehyde + 5 A + 4 H2O. Functionally, allows bacterial pathogens to use the host heme as an iron source. Catalyzes the oxidative degradation of the heme macrocyclic porphyrin ring to the oxo-bilirubin chromophore staphylobilin (a mixture of the linear tetrapyrroles 5-oxo-delta-bilirubin and 15-oxo-beta-bilirubin) in the presence of a suitable electron donor such as ascorbate or NADPH--cytochrome P450 reductase, with subsequent release of free iron. The chain is Heme oxygenase (staphylobilin-producing) (isdI) from Staphylococcus aureus (strain Mu3 / ATCC 700698).